Reading from the N-terminus, the 153-residue chain is Small ribosomal subunit protein uS9 (153 aa).

The span at 1-19 (MTAPADEAPAVEDAPVAED) shows a compositional bias: low complexity. Disordered stretches follow at residues 1 to 23 (MTAP…IAPV) and 121 to 153 (LKKA…YSKR). The segment covering 129-138 (RDSREKERKK) has biased composition (basic and acidic residues). Basic residues predominate over residues 139–153 (YGLKKARKAPQYSKR).

Belongs to the universal ribosomal protein uS9 family.

The polypeptide is Small ribosomal subunit protein uS9 (Saccharopolyspora erythraea (strain ATCC 11635 / DSM 40517 / JCM 4748 / NBRC 13426 / NCIMB 8594 / NRRL 2338)).